The chain runs to 257 residues: UPF0246 protein Spea_1078 (257 aa).

Belongs to the UPF0246 family.

This chain is UPF0246 protein Spea_1078, found in Shewanella pealeana (strain ATCC 700345 / ANG-SQ1).